The sequence spans 55 residues: Large ribosomal subunit protein bL33 (55 aa).

It belongs to the bacterial ribosomal protein bL33 family.

This Cereibacter sphaeroides (strain ATCC 17029 / ATH 2.4.9) (Rhodobacter sphaeroides) protein is Large ribosomal subunit protein bL33.